A 200-amino-acid chain; its full sequence is NAD(P)H dehydrogenase (quinone) (200 aa).

One can recognise a Flavodoxin-like domain in the interval 4 to 191 (VLVLYYSMYG…DIARFQGKHV (188 aa)). Residues 10–15 (SMYGHI) and 79–81 (TRF) each bind FMN. Residue Y12 coordinates NAD(+). W99 provides a ligand contact to substrate. Residues 114-120 (STGTQHG) and H135 contribute to the FMN site.

This sequence belongs to the WrbA family. FMN serves as cofactor.

The catalysed reaction is a quinone + NADH + H(+) = a quinol + NAD(+). The enzyme catalyses a quinone + NADPH + H(+) = a quinol + NADP(+). This chain is NAD(P)H dehydrogenase (quinone), found in Paraburkholderia phytofirmans (strain DSM 17436 / LMG 22146 / PsJN) (Burkholderia phytofirmans).